The primary structure comprises 97 residues: Putative pterin-4-alpha-carbinolamine dehydratase (97 aa).

Belongs to the pterin-4-alpha-carbinolamine dehydratase family.

The catalysed reaction is (4aS,6R)-4a-hydroxy-L-erythro-5,6,7,8-tetrahydrobiopterin = (6R)-L-erythro-6,7-dihydrobiopterin + H2O. The polypeptide is Putative pterin-4-alpha-carbinolamine dehydratase (Dinoroseobacter shibae (strain DSM 16493 / NCIMB 14021 / DFL 12)).